Here is a 342-residue protein sequence, read N- to C-terminus: Phosphate acyltransferase (342 aa).

It belongs to the PlsX family. In terms of assembly, homodimer. Probably interacts with PlsY.

The protein localises to the cytoplasm. The enzyme catalyses a fatty acyl-[ACP] + phosphate = an acyl phosphate + holo-[ACP]. The protein operates within lipid metabolism; phospholipid metabolism. Functionally, catalyzes the reversible formation of acyl-phosphate (acyl-PO(4)) from acyl-[acyl-carrier-protein] (acyl-ACP). This enzyme utilizes acyl-ACP as fatty acyl donor, but not acyl-CoA. The protein is Phosphate acyltransferase of Shewanella sediminis (strain HAW-EB3).